The chain runs to 567 residues: Protein phosphatase 1 regulatory inhibitor subunit 16B (567 aa).

Residues 15 to 55 are a coiled coil; sequence EKVPTLERLRAAQKRRAQQLKKWAQYEQDLQHRKRKHERKR. A Phosphoserine modification is found at S69. ANK repeat units lie at residues 100 to 129, 133 to 162, 228 to 257, and 261 to 290; these read DGLTALHQCCIDNFEEIVKLLLSHGANVNA, ELWTPLHAAATCGHINLVKILVQYGADLLA, QGATLLHIAGANGYLRAAELLLDHGVRVDV, and DGWEPLHAAAFWGQMQMAELLVSHGASLSA. A phosphoserine mark is found at S333, S337, and S350. The disordered stretch occupies residues 378–403; it reads RTSTYNGDIRETRTDQENKDPNPRLE. Basic and acidic residues predominate over residues 385 to 403; it reads DIRETRTDQENKDPNPRLE. S476 carries the post-translational modification Phosphoserine. Residues 504 to 515 are compositionally biased toward polar residues; it reads SSMARTGESSSE. The segment at 504–525 is disordered; the sequence is SSMARTGESSSEGKAPLIGGRT. An ANK 5 repeat occupies 530 to 559; sequence SNGTSVYYTVTSGDPPLLKFKAPIEEMEEK. Residue C563 is the site of S-palmitoyl cysteine attachment. At C564 the chain carries Cysteine methyl ester. C564 carries the S-farnesyl cysteine lipid modification. A propeptide spans 565–567 (removed in mature form); sequence RIS.

Interacts with PPP1CA, PPP1CB and MSN. Interacts (via its fourth ankyrin repeat) with the mature dimeric form of RPSA/LAMR1. Interacts with EEF1A1. Interacts with PTEN. Interacts with ECE1. Post-translationally, phosphorylated by PKA and, after PKA priming, by GSK3B. Phosphorylation by GSK3B reduces its association with PP1C and enhances PP1C activity. Dephosphorylation by its associated PP1C results in enhanced association with PP1C, but reduced PP1C activity.

It is found in the cell membrane. It localises to the nucleus. The protein resides in the cell projection. Regulator of protein phosphatase 1 (PP1) that acts as a positive regulator of pulmonary endothelial cell (EC) barrier function. Involved in the regulation of the PI3K/AKT signaling pathway, angiogenesis and endothelial cell proliferation. Regulates angiogenesis and endothelial cell proliferation through the control of ECE1 dephosphorylation, trafficking and activity. Protects the endothelial barrier from lipopolysaccharide (LPS)-induced vascular leakage. Involved in the regulation of endothelial cell filopodia extension. May be a downstream target for TGF-beta1 signaling cascade in endothelial cells. Involved in PKA-mediated moesin dephosphorylation which is important in EC barrier protection against thrombin stimulation. Promotes the interaction of PPP1CA with RPSA/LAMR1 and in turn facilitates the dephosphorylation of RPSA/LAMR1. Involved in the dephosphorylation of EEF1A1. The sequence is that of Protein phosphatase 1 regulatory inhibitor subunit 16B (PPP1R16B) from Homo sapiens (Human).